We begin with the raw amino-acid sequence, 59 residues long: Single-pass membrane and coiled-coil domain-containing protein 4 (59 aa).

The tract at residues 1 to 27 (MRQLKGKPKKETSRDKKERKQAMQEAR) is disordered. Over residues 9-27 (KKETSRDKKERKQAMQEAR) the composition is skewed to basic and acidic residues. Residues 9–31 (KKETSRDKKERKQAMQEARRQIT) are a coiled coil. A helical transmembrane segment spans residues 32 to 52 (TVVLPTLAVVVLLIVVFVYVA).

It belongs to the SMCO4 family.

The protein localises to the membrane. This is Single-pass membrane and coiled-coil domain-containing protein 4 (SMCO4) from Bos taurus (Bovine).